We begin with the raw amino-acid sequence, 96 residues long: Co-chaperonin GroES (96 aa).

The protein belongs to the GroES chaperonin family. Heptamer of 7 subunits arranged in a ring. Interacts with the chaperonin GroEL.

It localises to the cytoplasm. Its function is as follows. Together with the chaperonin GroEL, plays an essential role in assisting protein folding. The GroEL-GroES system forms a nano-cage that allows encapsulation of the non-native substrate proteins and provides a physical environment optimized to promote and accelerate protein folding. GroES binds to the apical surface of the GroEL ring, thereby capping the opening of the GroEL channel. The chain is Co-chaperonin GroES from Wolbachia pipientis wMel.